The primary structure comprises 286 residues: Probable aquaporin PIP-type pTOM75 (286 aa).

A disordered region spans residues Met1–Pro35. The Cytoplasmic portion of the chain corresponds to Met1–Gly55. A compositionally biased stretch (basic and acidic residues) spans Glu7–Glu18. The chain crosses the membrane as a helical span at residues Ile56–Leu76. The Extracellular segment spans residues Lys77–Gln89. Residues Gly90–Ser110 traverse the membrane as a helical segment. At Gly111–Ala133 the chain is on the cytoplasmic side. The short motif at Asn115–Ala117 is the NPA 1 element. Residues Val134–Phe154 traverse the membrane as a helical segment. At Met155 to Lys175 the chain is on the extracellular side. The chain crosses the membrane as a helical span at residues Gly176 to Ala196. The Cytoplasmic portion of the chain corresponds to Thr197–Pro209. The helical transmembrane segment at Ile210–Ile230 threads the bilayer. The Extracellular segment spans residues Thr231 to Trp257. Residues Asn236–Ala238 carry the NPA 2 motif. The helical transmembrane segment at Ile258 to Ile278 threads the bilayer. Topologically, residues Arg279–Ser286 are cytoplasmic.

The protein belongs to the MIP/aquaporin (TC 1.A.8) family. PIP (TC 1.A.8.11) subfamily. Roots, ripening fruit and senescing leaves.

It is found in the cell membrane. Its function is as follows. Aquaporins facilitate the transport of water and small neutral solutes across cell membranes. In Solanum lycopersicum (Tomato), this protein is Probable aquaporin PIP-type pTOM75.